The sequence spans 572 residues: Urease subunit alpha (572 aa).

The region spanning 134-572 is the Urease domain; sequence GGIDAHVHMI…VSLGQLYFFS (439 aa). The Ni(2+) site is built by His139, His141, and Lys222. An N6-carboxylysine modification is found at Lys222. Substrate is bound at residue His224. Residues His251 and His277 each contribute to the Ni(2+) site. The active-site Proton donor is His325. Asp365 is a binding site for Ni(2+).

Belongs to the metallo-dependent hydrolases superfamily. Urease alpha subunit family. As to quaternary structure, heterotrimer of UreA (gamma), UreB (beta) and UreC (alpha) subunits. Three heterotrimers associate to form the active enzyme. Ni cation serves as cofactor. In terms of processing, carboxylation allows a single lysine to coordinate two nickel ions.

The protein localises to the cytoplasm. The enzyme catalyses urea + 2 H2O + H(+) = hydrogencarbonate + 2 NH4(+). It functions in the pathway nitrogen metabolism; urea degradation; CO(2) and NH(3) from urea (urease route): step 1/1. The polypeptide is Urease subunit alpha (Laribacter hongkongensis (strain HLHK9)).